The sequence spans 504 residues: MHPSAGVNNNQHLNHQPYQQMSHYNAQQMHQQQLHHQLMTPNPYQQHFQQQMHPQLHHEDHLNMHFNPMSYPQQQQQQQQQQQQQQQHLHHFGHQIPAPPAQQGPTPQQPHLHQQIPHPLSHHQTPQPTPQPLAQQQSPQPARQPRQTKKQKQQAQNQDQADAQSQAQQHHMAMMARANQNDMLESSTRKVAPRSSDLFRVGPPFSISKQHQPVYCVGTDMPVTPLLHARIDRGFEMGETGSWIGYKRNYFTLVASFTLQDFDFEKFIGNKFYTYDKVNNKVNGFPPHHPSHPQNQPQNHPGHPHHNQHAGESRVPISYFAIRLVAKCSDEDVAISLIQHTAKRDKGPQFPPPIYPAVPSELPDHETVKVSCNKRNNNKIETMNKIFYFDRGNYYQEYNLDSYKDQSILKSYPSQSISKVARFERIQFTSSIRVKSTNTTARYFTLHVELLGIIEDEDLQIQPILLSSIESPPLIVRGRSPSSYHKDRTSGYRATNTPTPTPPQ.

3 disordered regions span residues 64–172 (MHFN…QHHM), 283–310 (NGFP…NQHA), and 477–504 (RGRS…TPPQ). 4 stretches are compositionally biased toward low complexity: residues 73 to 87 (QQQQ…QQQQ), 103 to 145 (QGPT…ARQP), 153 to 172 (QQAQ…QHHM), and 292 to 301 (HPQNQPQNHP). Positions 160–488 (QADAQSQAQQ…RSPSSYHKDR (329 aa)) form a DNA-binding region, NDT80.

It localises to the nucleus. Meiosis-specific transcription factor that binds to the middle sporulation element (MSE) of targeted genes corresponding to the consensus sequence 5'-ACACAAA-3'. Acts as an activator of CDR1 induction by antifungal drugs. Modulates azole sensitivity by controlling the expression of ergosterol biosynthesis genes. Required for hyphal growth in response to different filament-inducing cues and for the proper expression of genes characterizing the filamentous transcriptional program including noteworthy genes encoding cell wall components, such as HWP1, ECE1, RBT4, and ALS3. Is essential for the completion of cell separation through the direct transcriptional regulation of genes encoding the chitinase CHT3 and the cell wall glucosidase SUN41. Required for biofilm formation and plays a key role in microcolony formation under both flow and static conditions and to epithelial surfaces. Essential for virulence. The polypeptide is Transcription factor NDT80 (Candida albicans (strain SC5314 / ATCC MYA-2876) (Yeast)).